A 118-amino-acid polypeptide reads, in one-letter code: Ly-6/neurotoxin-like protein 1 (118 aa).

An N-terminal signal peptide occupies residues 1–22 (MTPLLTLFLVVLMGLPLAPVQA). The UPAR/Ly6 domain maps to 23 to 107 (LDCHVCAYNG…LAIPATLALA (85 aa)). 5 disulfides stabilise this stretch: Cys25–Cys48, Cys28–Cys35, Cys41–Cys66, Cys70–Cys87, and Cys88–Cys93. The GPI-anchor amidated serine moiety is linked to residue Ser95. Residues 96-118 (AGLAIPATLALAPVLLATLWGLL) constitute a propeptide, removed in mature form.

In terms of assembly, interacts with nAChRs containing alpha-4:beta-2 (CHRNA4:CHRNB2) and alpha-7 (CHRNA7) subunits. Interacts with CHRNA4 probably in the endoplasmic reticulum prior to nAChR pentameric assembly. Interacts with KCNA2/Potassium voltage-gated channel subfamily A member 2. Expressed in lung predominantly in airway epithelial cells, submucous glands, and smooth muscle cells, in endothelial and smooth muscle cells in vessel walls and in alveolar type II cells (at protein level). Also expressed in brain.

It localises to the cell membrane. The protein localises to the cell projection. The protein resides in the dendrite. It is found in the endoplasmic reticulum. Acts in different tissues through interaction to nicotinic acetylcholine receptors (nAChRs). The proposed role as modulator of nAChR activity seems to be dependent on the nAChR subtype and stoichiometry, and to involve an effect on nAChR trafficking and its cell surface expression, and on single channel properties of the nAChR inserted in the plasma membrane. Modulates functional properties of nicotinic acetylcholine receptors (nAChRs) to prevent excessive excitation, and hence neurodegeneration. Enhances desensitization by increasing both the rate and extent of desensitization of alpha-4:beta-2-containing nAChRs and slowing recovery from desensitization. Promotes large amplitude ACh-evoked currents through alpha-4:beta-2 nAChRs. Is involved in regulation of the nAChR pentameric assembly in the endoplasmic reticulum. Shifts stoichiometry from high sensitivity alpha-4(2):beta-2(3) to low sensitivity alpha-4(3):beta-2(2) nAChR. In vitro modulates alpha-3:beta-4-containing nAChRs. Reduces cell surface expression of (alpha-3:beta-4)(2):beta-4 and (alpha-3:beta-4)(2):alpha-5 nAChRs suggesting an interaction with nAChR alpha-3(-):(+)beta-4 subunit interfaces and an allosteric mode. Corresponding single channel effects characterized by decreased unitary conductance, altered burst proportions and enhanced desensitization/inactivation seem to depend on nAChR alpha:alpha subunit interfaces and are greater in (alpha-3:beta-2)(2):alpha-3 when compared to (alpha-3:beta-2)(2):alpha-5 nAChRs. Prevents plasticity in the primary visual cortex late in life. This is Ly-6/neurotoxin-like protein 1 from Macaca mulatta (Rhesus macaque).